Consider the following 86-residue polypeptide: Acyl carrier protein (86 aa).

Positions 5 to 80 constitute a Carrier domain; sequence EEILKKVQSI…EAVEFIIDKI (76 aa). Position 40 is an O-(pantetheine 4'-phosphoryl)serine (Ser-40).

It belongs to the acyl carrier protein (ACP) family. Post-translationally, 4'-phosphopantetheine is transferred from CoA to a specific serine of apo-ACP by AcpS. This modification is essential for activity because fatty acids are bound in thioester linkage to the sulfhydryl of the prosthetic group.

Its subcellular location is the plastid. The protein resides in the chloroplast. The protein operates within lipid metabolism; fatty acid biosynthesis. Its function is as follows. Carrier of the growing fatty acid chain in fatty acid biosynthesis. In Cyanidium caldarium (Red alga), this protein is Acyl carrier protein.